Consider the following 448-residue polypeptide: Glutamyl-tRNA reductase (448 aa).

Substrate contacts are provided by residues 49-52, Ser109, 114-116, and Gln120; these read TCNR and ETQ. Residue Cys50 is the Nucleophile of the active site. 189 to 194 provides a ligand contact to NADP(+); it reads GAGEMS.

Belongs to the glutamyl-tRNA reductase family. As to quaternary structure, homodimer.

The catalysed reaction is (S)-4-amino-5-oxopentanoate + tRNA(Glu) + NADP(+) = L-glutamyl-tRNA(Glu) + NADPH + H(+). Its pathway is porphyrin-containing compound metabolism; protoporphyrin-IX biosynthesis; 5-aminolevulinate from L-glutamyl-tRNA(Glu): step 1/2. Catalyzes the NADPH-dependent reduction of glutamyl-tRNA(Glu) to glutamate 1-semialdehyde (GSA). In Staphylococcus aureus (strain Mu3 / ATCC 700698), this protein is Glutamyl-tRNA reductase.